We begin with the raw amino-acid sequence, 296 residues long: Ribosomal RNA small subunit methyltransferase H (296 aa).

Residues 30–32 (GGH), Asp-49, Phe-76, Asp-97, and Gln-104 contribute to the S-adenosyl-L-methionine site.

Belongs to the methyltransferase superfamily. RsmH family.

The protein localises to the cytoplasm. The enzyme catalyses cytidine(1402) in 16S rRNA + S-adenosyl-L-methionine = N(4)-methylcytidine(1402) in 16S rRNA + S-adenosyl-L-homocysteine + H(+). Its function is as follows. Specifically methylates the N4 position of cytidine in position 1402 (C1402) of 16S rRNA. The sequence is that of Ribosomal RNA small subunit methyltransferase H from Mesomycoplasma hyopneumoniae (strain 232) (Mycoplasma hyopneumoniae).